The following is a 274-amino-acid chain: Dermonecrotic toxin SdSicTox-betaIIB2i (274 aa).

Residue H5 is part of the active site. The Mg(2+) site is built by E25 and D27. Catalysis depends on H41, which acts as the Nucleophile. 2 disulfide bridges follow: C45-C51 and C47-C190. D85 lines the Mg(2+) pocket.

This sequence belongs to the arthropod phospholipase D family. Class II subfamily. Mg(2+) serves as cofactor. As to expression, expressed by the venom gland.

The protein localises to the secreted. It catalyses the reaction an N-(acyl)-sphingosylphosphocholine = an N-(acyl)-sphingosyl-1,3-cyclic phosphate + choline. The catalysed reaction is an N-(acyl)-sphingosylphosphoethanolamine = an N-(acyl)-sphingosyl-1,3-cyclic phosphate + ethanolamine. The enzyme catalyses a 1-acyl-sn-glycero-3-phosphocholine = a 1-acyl-sn-glycero-2,3-cyclic phosphate + choline. It carries out the reaction a 1-acyl-sn-glycero-3-phosphoethanolamine = a 1-acyl-sn-glycero-2,3-cyclic phosphate + ethanolamine. In terms of biological role, dermonecrotic toxins cleave the phosphodiester linkage between the phosphate and headgroup of certain phospholipids (sphingolipid and lysolipid substrates), forming an alcohol (often choline) and a cyclic phosphate. This toxin acts on sphingomyelin (SM). It may also act on ceramide phosphoethanolamine (CPE), lysophosphatidylcholine (LPC) and lysophosphatidylethanolamine (LPE), but not on lysophosphatidylserine (LPS), and lysophosphatidylglycerol (LPG). It acts by transphosphatidylation, releasing exclusively cyclic phosphate products as second products. Induces dermonecrosis, hemolysis, increased vascular permeability, edema, inflammatory response, and platelet aggregation. The chain is Dermonecrotic toxin SdSicTox-betaIIB2i from Sicarius cf. damarensis (strain GJB-2008) (Six-eyed sand spider).